We begin with the raw amino-acid sequence, 109 residues long: Hainantoxin-XVIII-3 (109 aa).

A signal peptide spans 1-18 (MKLSIIIIATSLVIAVVA). Residues 19-46 (FPSKDSKAIENDKTEQRMEIVVQETARA) constitute a propeptide that is removed on maturation. Disulfide bonds link Cys-47/Cys-62, Cys-55/Cys-68, Cys-59/Cys-108, and Cys-61/Cys-81.

It belongs to the neurotoxin 25 family. F7 subfamily. As to expression, expressed by the venom gland.

The protein localises to the secreted. In terms of biological role, putative ion channel inhibitor. The polypeptide is Hainantoxin-XVIII-3 (Cyriopagopus hainanus (Chinese bird spider)).